We begin with the raw amino-acid sequence, 108 residues long: MPLTPPPDYTKPFIAVVVGGTLAAFVLLLTRNTLPHTGDNLHSLPHGGTYCDGTKRIRYGGPHRSHVPELPAKSWALITVVAILIALHFSCLRTHRVHRCVLCHTTSG.

Over 1 to 8 (MPLTPPPD) the chain is Cytoplasmic. A helical transmembrane segment spans residues 9-29 (YTKPFIAVVVGGTLAAFVLLL). Topologically, residues 30 to 71 (TRNTLPHTGDNLHSLPHGGTYCDGTKRIRYGGPHRSHVPELP) are lumenal. Residues 72-92 (AKSWALITVVAILIALHFSCL) form a helical membrane-spanning segment. Topologically, residues 93–108 (RTHRVHRCVLCHTTSG) are cytoplasmic.

This sequence belongs to the Tymovirales TGBp2 protein family.

The protein resides in the host endoplasmic reticulum membrane. Functionally, plays a role in viral cell-to-cell propagation, by facilitating genome transport to neighboring plant cells through plasmosdesmata,. In Lily virus X, this protein is Movement protein TGB2.